The chain runs to 379 residues: Isocitrate dehydrogenase [NAD] subunit 2, mitochondrial (379 aa).

Residues M1–F27 constitute a mitochondrion transit peptide. Substrate-binding residues include R129, R139, R160, and D247. Mg(2+)-binding residues include D247, D273, and D277.

The protein belongs to the isocitrate and isopropylmalate dehydrogenases family. In terms of assembly, octamer of two non-identical subunits IDH1 and IDH2. Mg(2+) serves as cofactor. Requires Mn(2+) as cofactor.

Its subcellular location is the mitochondrion. It catalyses the reaction D-threo-isocitrate + NAD(+) = 2-oxoglutarate + CO2 + NADH. Functionally, performs an essential role in the oxidative function of the citric acid cycle and is involved in glutamate biosynthesis. Also binds RNA; specifically to the 5'-untranslated leaders of mitochondrial mRNAs. The polypeptide is Isocitrate dehydrogenase [NAD] subunit 2, mitochondrial (idh2) (Schizosaccharomyces pombe (strain 972 / ATCC 24843) (Fission yeast)).